The chain runs to 365 residues: MKVVVGMSGGVDSSVTALLLKQQGYEVTGLFMKNWEDDDDDEYCSTRQDLVDVASVCDVIGIDLEVVNFSAEYKDRVFADFLREYEAGRTPNPDILCNSEIKFRCFLDHAMQLGAERIATGHYAQVREWINDGRSEFQLLKAEDGTKDQSYFLYRLNQAQLAKTLFPLGGLYKREVRKIAEAAGLHVATKKDSTGICFIGERPFREFLMRYLPTKPGEIRCLDDDRVLGEHQGLMYHTIGQRKGLHIGGIKGNQDEAGEHEAWYVAKKDVKANVLYVVQGHDHPALLKDRLLATDLNWIAGRDPRTHWVYTAKPRYRTADMPCEIDALGEGRAEIAFATPQWALTPGQSVVVYESKVCLGGGVIV.

Residues 6-13 (GMSGGVDS) and Met-32 each bind ATP. The interaction with target base in tRNA stretch occupies residues 92–94 (NPD). Cys-97 (nucleophile) is an active-site residue. Cys-97 and Cys-197 are disulfide-bonded. Gly-121 provides a ligand contact to ATP. The interaction with tRNA stretch occupies residues 147–149 (KDQ). Cys-197 functions as the Cysteine persulfide intermediate in the catalytic mechanism. The segment at 315–316 (RY) is interaction with tRNA.

This sequence belongs to the MnmA/TRMU family.

It is found in the cytoplasm. The enzyme catalyses S-sulfanyl-L-cysteinyl-[protein] + uridine(34) in tRNA + AH2 + ATP = 2-thiouridine(34) in tRNA + L-cysteinyl-[protein] + A + AMP + diphosphate + H(+). Functionally, catalyzes the 2-thiolation of uridine at the wobble position (U34) of tRNA, leading to the formation of s(2)U34. The polypeptide is tRNA-specific 2-thiouridylase MnmA (Azoarcus sp. (strain BH72)).